A 434-amino-acid chain; its full sequence is MKVDLSITAVKAREILDSRGNPTVEVEVVVNDEFVGRAAVPSGASTGIFEAVELRDGDKKRYMGKGVLKAVENVNEVIAPEIIGMNALNQVEIDKLMIELDGTENKSKLGANAILGVSLAVAKAAANALGLPLYQYIGGVNAKYLPVPMMNILNGGKHADNSVDLQEFMIMPVGAKSFSEALRMCAETFHHLRNVLKARGYNTTVGDEGGFAPNLKSNEEPLEVIVEAIEKAGYTPGKDIAIALDPATSELYNEEDGKYYFEREGKVRTKEEMVEFWVKLVEKYPIVSIEDGVAEEDWEGWKMLTEALGNKIQLVGDDLFVTNTKRLAKGIELGVANSILIKLNQIGTLTETLEAIEMANRAGYTAVVSHRSGETEDTTIADLVVAVNAGQIKTGAPSRTDRVAKYNQLLRIEEELGSVAVYPGMNAFFNLKKK.

A (2R)-2-phosphoglycerate-binding site is contributed by Gln166. The Proton donor role is filled by Glu208. Residues Asp245, Glu290, and Asp317 each coordinate Mg(2+). (2R)-2-phosphoglycerate is bound by residues Lys342, Arg371, Ser372, and Lys393. Lys342 acts as the Proton acceptor in catalysis.

Belongs to the enolase family. The cofactor is Mg(2+).

The protein resides in the cytoplasm. It localises to the secreted. Its subcellular location is the cell surface. It catalyses the reaction (2R)-2-phosphoglycerate = phosphoenolpyruvate + H2O. It functions in the pathway carbohydrate degradation; glycolysis; pyruvate from D-glyceraldehyde 3-phosphate: step 4/5. Catalyzes the reversible conversion of 2-phosphoglycerate (2-PG) into phosphoenolpyruvate (PEP). It is essential for the degradation of carbohydrates via glycolysis. The chain is Enolase from Caldicellulosiruptor bescii (strain ATCC BAA-1888 / DSM 6725 / KCTC 15123 / Z-1320) (Anaerocellum thermophilum).